We begin with the raw amino-acid sequence, 246 residues long: Anamorsin homolog (246 aa).

Residues 1-124 (MRVVVVDLDG…ARGTAFSLKS (124 aa)) are N-terminal SAM-like domain. Residues 125 to 158 (RAVRVVTADAGWGADADVDDELIDESALLTELDV) form a linker region. Cys168, Cys177, Cys180, and Cys182 together coordinate [2Fe-2S] cluster. The interval 168-182 (CDVGAGKKACKNCTC) is fe-S binding site A. Residues Cys206, Cys209, Cys217, and Cys220 each contribute to the [4Fe-4S] cluster site. Short sequence motifs (cx2C motif) lie at residues 206–209 (CGNC) and 217–220 (CAGC). Residues 206-220 (CGNCALGDAFRCAGC) are fe-S binding site B.

It belongs to the anamorsin family. In terms of assembly, monomer. [2Fe-2S] cluster is required as a cofactor. [4Fe-4S] cluster serves as cofactor.

The protein resides in the cytoplasm. It localises to the mitochondrion intermembrane space. Functionally, component of the cytosolic iron-sulfur (Fe-S) protein assembly (CIA) machinery. Required for the maturation of extramitochondrial Fe-S proteins. Part of an electron transfer chain functioning in an early step of cytosolic Fe-S biogenesis, facilitating the de novo assembly of a [4Fe-4S] cluster on the cytosolic Fe-S scaffold complex. Electrons are transferred from NADPH via a FAD- and FMN-containing diflavin oxidoreductase. Together with the diflavin oxidoreductase, also required for the assembly of the diferric tyrosyl radical cofactor of ribonucleotide reductase (RNR), probably by providing electrons for reduction during radical cofactor maturation in the catalytic small subunit. In Ostreococcus tauri, this protein is Anamorsin homolog.